A 147-amino-acid chain; its full sequence is Transcriptional regulator MraZ (147 aa).

2 consecutive SpoVT-AbrB domains span residues 5–51 (GTPV…PQPV) and 80–123 (ACDV…DSEK).

Belongs to the MraZ family. As to quaternary structure, forms oligomers.

It localises to the cytoplasm. The protein resides in the nucleoid. This is Transcriptional regulator MraZ from Nitrosospira multiformis (strain ATCC 25196 / NCIMB 11849 / C 71).